The sequence spans 196 residues: Holliday junction branch migration complex subunit RuvA (196 aa).

The tract at residues 1–62 is domain I; it reads MYEYINGLIT…ENEMTLYGFI (62 aa). The interval 63-141 is domain II; sequence DENEKYLFNK…DLALSAGMTV (79 aa). A flexible linker region spans residues 142-146; it reads ETVPT. A domain III region spans residues 147 to 196; the sequence is TDNQALADALAALESLGYSAKDVAKLQTVLANQKDTTDGYIRSALKFLVK.

It belongs to the RuvA family. Homotetramer. Forms an RuvA(8)-RuvB(12)-Holliday junction (HJ) complex. HJ DNA is sandwiched between 2 RuvA tetramers; dsDNA enters through RuvA and exits via RuvB. An RuvB hexamer assembles on each DNA strand where it exits the tetramer. Each RuvB hexamer is contacted by two RuvA subunits (via domain III) on 2 adjacent RuvB subunits; this complex drives branch migration. In the full resolvosome a probable DNA-RuvA(4)-RuvB(12)-RuvC(2) complex forms which resolves the HJ.

The protein resides in the cytoplasm. Its function is as follows. The RuvA-RuvB-RuvC complex processes Holliday junction (HJ) DNA during genetic recombination and DNA repair, while the RuvA-RuvB complex plays an important role in the rescue of blocked DNA replication forks via replication fork reversal (RFR). RuvA specifically binds to HJ cruciform DNA, conferring on it an open structure. The RuvB hexamer acts as an ATP-dependent pump, pulling dsDNA into and through the RuvAB complex. HJ branch migration allows RuvC to scan DNA until it finds its consensus sequence, where it cleaves and resolves the cruciform DNA. This Leuconostoc citreum (strain KM20) protein is Holliday junction branch migration complex subunit RuvA.